Here is a 545-residue protein sequence, read N- to C-terminus: CTP synthase (545 aa).

Residues 1-266 are amidoligase domain; the sequence is MTTNYIFVTG…DDYICKRFSL (266 aa). Ser14 lines the CTP pocket. Position 14 (Ser14) interacts with UTP. ATP contacts are provided by residues 15 to 20 and Asp72; that span reads SLGKGI. The Mg(2+) site is built by Asp72 and Glu140. Residues 147–149, 187–192, and Lys223 each bind CTP; these read DIE and KTKPTQ. UTP-binding positions include 187–192 and Lys223; that span reads KTKPTQ. Residue 239-241 coordinates ATP; it reads KDV. The 252-residue stretch at 291–542 folds into the Glutamine amidotransferase type-1 domain; that stretch reads TIGMVGKYIE…VKAASEHQKR (252 aa). L-glutamine is bound at residue Gly352. Cys379 (nucleophile; for glutamine hydrolysis) is an active-site residue. Residues 380–383, Glu403, and Arg470 contribute to the L-glutamine site; that span reads LGMQ. Catalysis depends on residues His515 and Glu517.

The protein belongs to the CTP synthase family. As to quaternary structure, homotetramer.

The enzyme catalyses UTP + L-glutamine + ATP + H2O = CTP + L-glutamate + ADP + phosphate + 2 H(+). The catalysed reaction is L-glutamine + H2O = L-glutamate + NH4(+). It carries out the reaction UTP + NH4(+) + ATP = CTP + ADP + phosphate + 2 H(+). It functions in the pathway pyrimidine metabolism; CTP biosynthesis via de novo pathway; CTP from UDP: step 2/2. Allosterically activated by GTP, when glutamine is the substrate; GTP has no effect on the reaction when ammonia is the substrate. The allosteric effector GTP functions by stabilizing the protein conformation that binds the tetrahedral intermediate(s) formed during glutamine hydrolysis. Inhibited by the product CTP, via allosteric rather than competitive inhibition. Functionally, catalyzes the ATP-dependent amination of UTP to CTP with either L-glutamine or ammonia as the source of nitrogen. Regulates intracellular CTP levels through interactions with the four ribonucleotide triphosphates. The sequence is that of CTP synthase from Salmonella schwarzengrund (strain CVM19633).